Consider the following 85-residue polypeptide: Metallothionein-like protein 4B (85 aa).

A disordered region spans residues 1-20; the sequence is MADTGKGSASASCNDRCGCP.

It belongs to the metallothionein superfamily. Type 15 family. In terms of tissue distribution, expressed specifically in seeds.

The protein resides in the cytoplasm. It localises to the nucleus. It is found in the cell membrane. Its function is as follows. Metallothioneins have a high content of cysteine residues that bind various heavy metals. Functions as a metal chelator of copper (Cu) and zinc (Zn). Plays a role in storing and distributing Zn ion in seed. This chain is Metallothionein-like protein 4B (MT4B), found in Arabidopsis thaliana (Mouse-ear cress).